A 1663-amino-acid chain; its full sequence is Cortactin-binding protein 2 (1663 aa).

5 disordered regions span residues 1-23 (MATD…AGAA), 203-222 (KKKT…RSTE), 358-440 (RQAS…LHPG), 454-479 (GNAN…PTSR), and 498-616 (RFTS…PKPS). Positions 119-276 (KKMQERMSAQ…EQLKRGSDSK (158 aa)) form a coiled coil. Over residues 386-396 (PSTDSTPDPTS) the composition is skewed to low complexity. The segment covering 411–422 (QTPGIAPQNSQA) has biased composition (polar residues). Position 498 is an asymmetric dimethylarginine (Arg498). Polar residues predominate over residues 583–597 (TVASPPSSLPQGNRV). 6 ANK repeats span residues 709-739 (GRPT…DINY), 743-772 (DGHS…QINA), 776-805 (NGFT…NINH), 809-838 (GGQT…NRSV), 842-871 (DGWT…PACG), and 912-942 (EGWT…EPER). The disordered stretch occupies residues 1447-1477 (KKKGESGAWRKVNTSPRRKSGRFSLPTWNKP). A Phosphoserine modification is found at Ser1524. Disordered regions lie at residues 1581 to 1602 (QKEV…KSKT) and 1618 to 1663 (SKVT…KHNK). Polar residues predominate over residues 1582 to 1599 (KEVSPLSSHQTTECSNSK). Residues 1624–1638 (SQNTKRSSSSSNTRQ) are compositionally biased toward low complexity. Positions 1645-1663 (SKEENWNLHKNEHLDKHNK) are enriched in basic and acidic residues.

In terms of assembly, interacts with CTTN/cortactin SH3 domain. Interacts with STRN, STRN4/zinedin and MOB4/phocein; this interactions mediate the association with the STRIPAK core complex and may regulate dendritic spine distribution of the STRIPAK complex in hippocampal neurons. Activation of glutamate receptors weakens the interaction with STRN and STRN4.

Its subcellular location is the cytoplasm. The protein resides in the cell cortex. The protein localises to the cell projection. It localises to the dendritic spine. In terms of biological role, regulates the dendritic spine distribution of CTTN/cortactin in hippocampal neurons, and thus controls dendritic spinogenesis and dendritic spine maintenance. Associates with the striatin-interacting phosphatase and kinase (STRIPAK) core complex to regulate dendritic spine distribution of the STRIPAK complex in hippocampal neurons. The polypeptide is Cortactin-binding protein 2 (CTTNBP2) (Papio anubis (Olive baboon)).